A 339-amino-acid chain; its full sequence is FR-33289 synthase (339 aa).

Residues His150, Asp152, and His288 each contribute to the Fe(2+) site.

It belongs to the TfdA dioxygenase family. Homodimer. Fe(2+) is required as a cofactor.

It catalyses the reaction 3-(N-acetyl-N-hydroxy)aminopropylphosphonate + 2-oxoglutarate + O2 = (R)-(3-(acetylhydroxyamino)-2-hydroxypropyl)phosphonate + succinate + CO2. Its pathway is antibiotic biosynthesis. Monooxygenase involved in the biosynthesis of the phosphonate antibiotic FR-33289, an antimalarial agent. Catalyzes the oxidative decarboxylation of the antibiotic FR-900098 (3-(N-acetyl-N-hydroxy)aminopropylphosphonate) to form FR-33289 ((R)-(3-(acetylhydroxyamino)-2-hydroxypropyl)phosphonate). This is FR-33289 synthase from Streptomyces rubellomurinus (strain ATCC 31215).